A 444-amino-acid chain; its full sequence is Tol-Pal system protein TolB (444 aa).

The N-terminal stretch at 1-19 (MRNIIYFILSLLFSFKGYA) is a signal peptide.

The protein belongs to the TolB family. As to quaternary structure, the Tol-Pal system is composed of five core proteins: the inner membrane proteins TolA, TolQ and TolR, the periplasmic protein TolB and the outer membrane protein Pal. They form a network linking the inner and outer membranes and the peptidoglycan layer.

It is found in the periplasm. Its function is as follows. Part of the Tol-Pal system, which plays a role in outer membrane invagination during cell division and is important for maintaining outer membrane integrity. The protein is Tol-Pal system protein TolB of Rickettsia felis (strain ATCC VR-1525 / URRWXCal2) (Rickettsia azadi).